We begin with the raw amino-acid sequence, 972 residues long: Coatomer subunit beta (972 aa).

HEAT repeat units follow at residues 79–113, 133–170, 317–354, 397–434, and 481–518; these read LLYF…DLQH, ELLE…VSEH, GCLE…SRNI, EIAA…LYPQ, and RQSI…QAGP. The tract at residues 494 to 522 is disordered; that stretch reads LKNQRKSQDEDDEATEESATKQAGPVILP.

As to quaternary structure, oligomeric complex that consists of at least the alpha, beta, beta', gamma, delta, epsilon and zeta subunits.

The protein resides in the cytoplasm. It localises to the golgi apparatus membrane. It is found in the cytoplasmic vesicle. The protein localises to the COPI-coated vesicle membrane. In terms of biological role, the coatomer is a cytosolic protein complex that binds to dilysine motifs and reversibly associates with Golgi non-clathrin-coated vesicles, which further mediate biosynthetic protein transport from the ER, via the Golgi up to the trans Golgi network. Coatomer complex is required for budding from Golgi membranes, and is essential for the retrograde Golgi-to-ER transport of dilysine-tagged proteins. This Candida glabrata (strain ATCC 2001 / BCRC 20586 / JCM 3761 / NBRC 0622 / NRRL Y-65 / CBS 138) (Yeast) protein is Coatomer subunit beta.